Reading from the N-terminus, the 447-residue chain is Phosphoglucosamine mutase (447 aa).

The Phosphoserine intermediate role is filled by S88. The Mg(2+) site is built by S88, D231, D233, and D235. S88 is modified (phosphoserine).

Belongs to the phosphohexose mutase family. Mg(2+) is required as a cofactor. In terms of processing, activated by phosphorylation.

It carries out the reaction alpha-D-glucosamine 1-phosphate = D-glucosamine 6-phosphate. In terms of biological role, catalyzes the conversion of glucosamine-6-phosphate to glucosamine-1-phosphate. In Methanococcus maripaludis (strain C7 / ATCC BAA-1331), this protein is Phosphoglucosamine mutase.